Here is a 216-residue protein sequence, read N- to C-terminus: Large ribosomal subunit protein uL1z (216 aa).

The protein belongs to the universal ribosomal protein uL1 family. In terms of assembly, interacts with the GTPase NUG2.

The chain is Large ribosomal subunit protein uL1z (RPL10AA) from Arabidopsis thaliana (Mouse-ear cress).